Consider the following 840-residue polypeptide: Protein translocase subunit SecA (840 aa).

ATP contacts are provided by residues Gln-89, 107–111 (GEGKT), and Asp-514.

It belongs to the SecA family. Monomer and homodimer. Part of the essential Sec protein translocation apparatus which comprises SecA, SecYEG and auxiliary proteins SecDF-YajC and YidC.

The protein resides in the cell inner membrane. Its subcellular location is the cytoplasm. The enzyme catalyses ATP + H2O + cellular proteinSide 1 = ADP + phosphate + cellular proteinSide 2.. In terms of biological role, part of the Sec protein translocase complex. Interacts with the SecYEG preprotein conducting channel. Has a central role in coupling the hydrolysis of ATP to the transfer of proteins into and across the cell membrane, serving as an ATP-driven molecular motor driving the stepwise translocation of polypeptide chains across the membrane. The chain is Protein translocase subunit SecA from Blochmanniella floridana.